A 122-amino-acid polypeptide reads, in one-letter code: Large ribosomal subunit protein uL18 (122 aa).

The disordered stretch occupies residues 1–25 (MSQISRKQQTQKRHRRLRRHITGTS). The span at 9–21 (QTQKRHRRLRRHI) shows a compositional bias: basic residues.

It belongs to the universal ribosomal protein uL18 family. In terms of assembly, part of the 50S ribosomal subunit; part of the 5S rRNA/L5/L18/L25 subcomplex. Contacts the 5S and 23S rRNAs.

This is one of the proteins that bind and probably mediate the attachment of the 5S RNA into the large ribosomal subunit, where it forms part of the central protuberance. The polypeptide is Large ribosomal subunit protein uL18 (Synechococcus sp. (strain CC9605)).